We begin with the raw amino-acid sequence, 1226 residues long: Chitin synthase IV (1226 aa).

The tract at residues methionine 1–glutamine 205 is disordered. The span at serine 49–glutamate 65 shows a compositional bias: polar residues. A compositionally biased stretch (low complexity) spans threonine 66 to threonine 75. The span at isoleucine 94 to asparagine 107 shows a compositional bias: basic and acidic residues. Over residues aspartate 134–aspartate 151 the composition is skewed to polar residues. Residues methionine 163–asparagine 172 are compositionally biased toward basic and acidic residues. Residues threonine 173–lysine 198 are compositionally biased toward basic residues. The chain crosses the membrane as a helical span at residues methionine 246 to phenylalanine 266. 3 N-linked (GlcNAc...) asparagine glycosylation sites follow: asparagine 381, asparagine 421, and asparagine 443. The chain crosses the membrane as a helical span at residues isoleucine 516–isoleucine 536. A disordered region spans residues leucine 572–serine 671. Composition is skewed to polar residues over residues alanine 580–phenylalanine 601 and threonine 618–arginine 643. Asparagine 640 carries N-linked (GlcNAc...) asparagine glycosylation. The segment covering proline 649 to glycine 666 has biased composition (low complexity). N-linked (GlcNAc...) asparagine glycosylation is found at asparagine 787 and asparagine 1035. 3 helical membrane passes run phenylalanine 1060–phenylalanine 1080, isoleucine 1094–threonine 1114, and tryptophan 1118–leucine 1138.

Belongs to the chitin synthase family. Class IV subfamily. As to expression, highly expressed in conidia.

The protein resides in the cell membrane. The enzyme catalyses [(1-&gt;4)-N-acetyl-beta-D-glucosaminyl](n) + UDP-N-acetyl-alpha-D-glucosamine = [(1-&gt;4)-N-acetyl-beta-D-glucosaminyl](n+1) + UDP + H(+). Polymerizes chitin, a structural polymer of the cell wall and septum, by transferring the sugar moiety of UDP-GlcNAc to the non-reducing end of the growing chitin polymer. Contributes to the production of conidia and the ability of fungal conidia to germinate. Involved in fungal stress tolerances. The polypeptide is Chitin synthase IV (Metarhizium acridum (strain CQMa 102)).